The sequence spans 570 residues: NADH-ubiquinone oxidoreductase chain 5 (570 aa).

Transmembrane regions (helical) follow at residues 2 to 22 (FSFF…FKHF), 27 to 47 (GVFL…LSNL), 56 to 76 (LIAI…VNFS), 77 to 97 (FYID…GVFV), 109 to 129 (PHIS…IILV), 134 to 154 (LVVF…LINF), 179 to 199 (VLIA…EAIL), 221 to 241 (LISF…GFHV), 251 to 271 (VPAS…FLIM), 285 to 305 (LVTA…AVFQ), 311 to 330 (ILAY…CSFG), 335 to 357 (VIVY…GNLI), 380 to 400 (FFFL…FGFY), 417 to 437 (AIFC…FNIL), 476 to 496 (IFLL…FYLL), and 524 to 544 (LLNY…LVLF).

It belongs to the complex I subunit 5 family.

It localises to the mitochondrion inner membrane. The enzyme catalyses a ubiquinone + NADH + 5 H(+)(in) = a ubiquinol + NAD(+) + 4 H(+)(out). Functionally, core subunit of the mitochondrial membrane respiratory chain NADH dehydrogenase (Complex I) that is believed to belong to the minimal assembly required for catalysis. Complex I functions in the transfer of electrons from NADH to the respiratory chain. The immediate electron acceptor for the enzyme is believed to be ubiquinone. The chain is NADH-ubiquinone oxidoreductase chain 5 (ND5) from Paramecium tetraurelia.